A 188-amino-acid chain; its full sequence is Xanthine phosphoribosyltransferase (188 aa).

Leucine 20 and asparagine 27 together coordinate xanthine. 127–131 (AHGEA) is a binding site for 5-phospho-alpha-D-ribose 1-diphosphate. Lysine 155 is a xanthine binding site.

This sequence belongs to the purine/pyrimidine phosphoribosyltransferase family. Xpt subfamily. Homodimer.

It is found in the cytoplasm. The catalysed reaction is XMP + diphosphate = xanthine + 5-phospho-alpha-D-ribose 1-diphosphate. Its pathway is purine metabolism; XMP biosynthesis via salvage pathway; XMP from xanthine: step 1/1. Converts the preformed base xanthine, a product of nucleic acid breakdown, to xanthosine 5'-monophosphate (XMP), so it can be reused for RNA or DNA synthesis. The protein is Xanthine phosphoribosyltransferase of Heliobacterium modesticaldum (strain ATCC 51547 / Ice1).